Here is a 407-residue protein sequence, read N- to C-terminus: MLFDKVKAFVVEIDGARTGTEPVFHGGQAVAGRVLLELAGAARVGALRLRARGRARAHWTESRSAGSSTAYTQSYSERVEVVNHRATLLAPDSGDIATLPAGRHEFPFSFQLPISLVTSFEGKHGSVRYSIKATLHRPWVPARCARKVFTVIEPVDINTPALLEPQAGAREKVARSWYCTRGLVSLSAKIDRKGYTPGEVIPIFAEIDNGSTRAVQPRAALVQTQTFMARGARKQKRAVVASVDGEPVGPNRRALWPGRALRIPPVGPSILQCRVLSVDYSLKVFVDIPGSSKLLLELPLVIGTVPLHPLGSRSASVGSRASFLQDWGLCTMMDRPEAPPEYSEVVRESQLVCASPGPSSLLHDLGVTTEGPYFACLQEFRYCPPPLYSEEDPNPPSEAVRPRCMTC.

The protein belongs to the arrestin family. As to quaternary structure, interacts with WWP1 (via WW domains).

The chain is Arrestin domain-containing protein 2 (Arrdc2) from Mus musculus (Mouse).